A 331-amino-acid polypeptide reads, in one-letter code: DNA-directed RNA polymerase subunit alpha (331 aa).

The interval 1–233 (MVREEIAVST…DLFLPFLHAE (233 aa)) is alpha N-terminal domain (alpha-NTD). The segment at 268 to 331 (ALKRVFIDQS…GILQKRFAID (64 aa)) is alpha C-terminal domain (alpha-CTD).

This sequence belongs to the RNA polymerase alpha chain family. In plastids the minimal PEP RNA polymerase catalytic core is composed of four subunits: alpha, beta, beta', and beta''. When a (nuclear-encoded) sigma factor is associated with the core the holoenzyme is formed, which can initiate transcription.

It localises to the plastid. The protein localises to the chloroplast. The enzyme catalyses RNA(n) + a ribonucleoside 5'-triphosphate = RNA(n+1) + diphosphate. DNA-dependent RNA polymerase catalyzes the transcription of DNA into RNA using the four ribonucleoside triphosphates as substrates. This chain is DNA-directed RNA polymerase subunit alpha, found in Illicium oligandrum (Star anise).